The following is a 383-amino-acid chain: Putative transcription factor 282R (383 aa).

It belongs to the IIV-6 282R family.

Functionally, transcription activation. This chain is Putative transcription factor 282R, found in Acheta domesticus (House cricket).